The following is a 319-amino-acid chain: GCN5-related N-acetyltransferase 5, chloroplastic (319 aa).

Residues 1 to 55 (MAALSISLAFSVDSLKPTQSTKFGFSSSSHRYPLLYSCKSHRSNLRFAFPPSSVS) constitute a chloroplast transit peptide. Residues 109–297 (MWVRVMRHEE…KHLMRKKLLP (189 aa)) enclose the N-acetyltransferase domain. Acetyl-CoA is bound by residues 218-220 (MTV), 226-231 (RRGIGW), 258-260 (DEA), and tyrosine 265. Tyrosine 265 (proton donor) is an active-site residue.

It belongs to the acetyltransferase family. GNAT subfamily. Oligomer. Post-translationally, autoacetylated. In terms of tissue distribution, expressed in green tissues.

Its subcellular location is the plastid. It is found in the chloroplast. The catalysed reaction is an N-terminal L-alpha-aminoacyl-[protein] + acetyl-CoA = N-terminal N(alpha)-acetyl-L-alpha-aminoacyl-[protein] + CoA + H(+). The enzyme catalyses L-lysyl-[protein] + acetyl-CoA = N(6)-acetyl-L-lysyl-[protein] + CoA + H(+). It catalyses the reaction N-terminal L-alanyl-[protein] + acetyl-CoA = N-terminal N(alpha)-acetyl-L-alanyl-[protein] + CoA + H(+). It carries out the reaction N-terminal L-seryl-[protein] + acetyl-CoA = N-terminal N(alpha)-acetyl-L-seryl-[protein] + CoA + H(+). The catalysed reaction is N-terminal L-methionyl-[protein] + acetyl-CoA = N-terminal N(alpha)-acetyl-L-methionyl-[protein] + CoA + H(+). The enzyme catalyses N-terminal L-valyl-[protein] + acetyl-CoA = N-terminal N(alpha)-acetyl-L-valyl-[protein] + CoA + H(+). It catalyses the reaction N-terminal L-threonyl-[protein] + acetyl-CoA = N-terminal N(alpha)-acetyl-L-threonyl-[protein] + CoA + H(+). Its function is as follows. Protein acetyltransferase with dual specificity triggering both N-alpha-acetylation (NTA), with a large spectrum of modified N-termini, including methionine, alanine, serine and to a lower extent threonine and valine as substrates, and epsilon-lysine acetylation (KA). The chain is GCN5-related N-acetyltransferase 5, chloroplastic from Arabidopsis thaliana (Mouse-ear cress).